A 430-amino-acid chain; its full sequence is Tektin-2 (430 aa).

Coiled coils occupy residues K80–L162 and N225–N382.

It belongs to the tektin family. As to quaternary structure, microtubule inner protein component of sperm flagellar doublet microtubules. May interact with CCDC172. Tyrosine phosphorylated. Post-translationally, ubiquitinated, leading to its degradation. Deubiquitinated by USP16, promoting its stability. In terms of tissue distribution, expressed at high levels in testis, trachea and fetal lung, and at lower levels in ovary, pituitary, adult lung, fetal brain and fetal kidney.

The protein resides in the cytoplasm. It localises to the cytoskeleton. Its subcellular location is the cilium axoneme. It is found in the flagellum axoneme. The protein localises to the microtubule organizing center. Its function is as follows. Microtubule inner protein (MIP) part of the dynein-decorated doublet microtubules (DMTs) in cilia and flagellar axoneme. Plays a key role in the assembly or attachment of the inner dynein arm to microtubules in sperm flagella and tracheal cilia. Forms filamentous polymers in the walls of ciliary and flagellar microtubules. The chain is Tektin-2 from Homo sapiens (Human).